A 548-amino-acid polypeptide reads, in one-letter code: Probable malate:quinone oxidoreductase (548 aa).

Residues 521 to 548 (DKPQAADSTPKPQLKPQPVQKEVADIAL) form a disordered region. Residues 530 to 541 (PKPQLKPQPVQK) show a composition bias toward low complexity.

This sequence belongs to the MQO family. Requires FAD as cofactor.

It carries out the reaction (S)-malate + a quinone = a quinol + oxaloacetate. Its pathway is carbohydrate metabolism; tricarboxylic acid cycle; oxaloacetate from (S)-malate (quinone route): step 1/1. This Escherichia coli O17:K52:H18 (strain UMN026 / ExPEC) protein is Probable malate:quinone oxidoreductase.